We begin with the raw amino-acid sequence, 595 residues long: Elongation factor 4 (595 aa).

Residues 2-184 form the tr-type G domain; that stretch reads SHIRNFSIIA…RLVATIPPPT (183 aa). GTP-binding positions include 14 to 19 and 131 to 134; these read DHGKST and NKMD.

This sequence belongs to the TRAFAC class translation factor GTPase superfamily. Classic translation factor GTPase family. LepA subfamily.

The protein resides in the cell inner membrane. It carries out the reaction GTP + H2O = GDP + phosphate + H(+). In terms of biological role, required for accurate and efficient protein synthesis under certain stress conditions. May act as a fidelity factor of the translation reaction, by catalyzing a one-codon backward translocation of tRNAs on improperly translocated ribosomes. Back-translocation proceeds from a post-translocation (POST) complex to a pre-translocation (PRE) complex, thus giving elongation factor G a second chance to translocate the tRNAs correctly. Binds to ribosomes in a GTP-dependent manner. The sequence is that of Elongation factor 4 from Pseudomonas syringae pv. tomato (strain ATCC BAA-871 / DC3000).